The following is an 89-amino-acid chain: Phytosulfokines 1 (89 aa).

An N-terminal signal peptide occupies residues 1–22 (MVNPGRTARALCLLCLALLLLG). Residues 23–79 (QDTHSRKLLLQEKHSHGVGNGTTTTQEPSRENGGSTGSNNNGQLQFDSAKWEEFHTD) constitute a propeptide that is removed on maturation. The disordered stretch occupies residues 33–68 (QEKHSHGVGNGTTTTQEPSRENGGSTGSNNNGQLQF). Asn42 carries N-linked (GlcNAc...) asparagine glycosylation. Sulfotyrosine is present on residues Tyr80 and Tyr82. Residues 85–89 (DVKNP) constitute a propeptide that is removed on maturation.

It belongs to the phytosulfokine family. Post-translationally, sulfation is important for activity and for the binding to a putative membrane receptor. PSK-alpha is produced by endopeptidase digestion. PSK-beta is produced from PSK-alpha by exopeptidase digestion. Expressed throughout the seedling. More abundant in fragments containing shoot or root apexes where cells proliferate vigorously.

It localises to the secreted. Functionally, promotes plant cell differentiation, organogenesis and somatic embryogenesis as well as cell proliferation. The polypeptide is Phytosulfokines 1 (PSK1) (Oryza sativa subsp. indica (Rice)).